The sequence spans 362 residues: Dual-specificity RNA methyltransferase RlmN (362 aa).

E91 (proton acceptor) is an active-site residue. Positions 97–333 (EDDRGTLCVS…VTTRKTRGED (237 aa)) constitute a Radical SAM core domain. C104 and C338 are disulfide-bonded. C111, C115, and C118 together coordinate [4Fe-4S] cluster. S-adenosyl-L-methionine contacts are provided by residues 164-165 (GE), S196, 218-220 (SLH), and N295. The S-methylcysteine intermediate role is filled by C338.

Belongs to the radical SAM superfamily. RlmN family. [4Fe-4S] cluster is required as a cofactor.

Its subcellular location is the cytoplasm. It catalyses the reaction adenosine(2503) in 23S rRNA + 2 reduced [2Fe-2S]-[ferredoxin] + 2 S-adenosyl-L-methionine = 2-methyladenosine(2503) in 23S rRNA + 5'-deoxyadenosine + L-methionine + 2 oxidized [2Fe-2S]-[ferredoxin] + S-adenosyl-L-homocysteine. The catalysed reaction is adenosine(37) in tRNA + 2 reduced [2Fe-2S]-[ferredoxin] + 2 S-adenosyl-L-methionine = 2-methyladenosine(37) in tRNA + 5'-deoxyadenosine + L-methionine + 2 oxidized [2Fe-2S]-[ferredoxin] + S-adenosyl-L-homocysteine. Its function is as follows. Specifically methylates position 2 of adenine 2503 in 23S rRNA and position 2 of adenine 37 in tRNAs. m2A2503 modification seems to play a crucial role in the proofreading step occurring at the peptidyl transferase center and thus would serve to optimize ribosomal fidelity. The polypeptide is Dual-specificity RNA methyltransferase RlmN (Methylobacillus flagellatus (strain ATCC 51484 / DSM 6875 / VKM B-1610 / KT)).